The following is a 476-amino-acid chain: Zinc finger CCCH domain-containing protein 6 (476 aa).

Positions 1 to 10 (MEQPHAAAAA) are enriched in low complexity. Residues 1 to 57 (MEQPHAAAAAAGGGEGEGGASPDTGLEGPMWRMGLGGGGGGGGGGGGGDGDAAGRLP) are disordered. Gly residues predominate over residues 34–51 (GLGGGGGGGGGGGGGDGD). C3H1-type zinc fingers lie at residues 59 to 87 (RPGE…HPRD), 108 to 136 (RAGQ…HPKQ), and 153 to 181 (RLGE…HPEF). Over residues 290-301 (SSTGQSSNNQQE) the composition is skewed to polar residues. The disordered stretch occupies residues 290 to 309 (SSTGQSSNNQQEHGFPERPG). C3H1-type zinc fingers lie at residues 307–335 (RPGQ…HPRE) and 353–381 (RPGA…HPMG). The interval 456-476 (TMMRAQTNTTSGGSSSPGGGR) is disordered.

The protein resides in the nucleus. This is Zinc finger CCCH domain-containing protein 6 from Oryza sativa subsp. japonica (Rice).